The following is a 324-amino-acid chain: Thiazole synthase (324 aa).

The active-site Schiff-base intermediate with DXP is Lys-167. 1-deoxy-D-xylulose 5-phosphate-binding positions include Gly-228, 254–255 (AG), and 276–277 (NT).

This sequence belongs to the ThiG family. As to quaternary structure, homotetramer. Forms heterodimers with either ThiH or ThiS.

The protein resides in the cytoplasm. The catalysed reaction is [ThiS sulfur-carrier protein]-C-terminal-Gly-aminoethanethioate + 2-iminoacetate + 1-deoxy-D-xylulose 5-phosphate = [ThiS sulfur-carrier protein]-C-terminal Gly-Gly + 2-[(2R,5Z)-2-carboxy-4-methylthiazol-5(2H)-ylidene]ethyl phosphate + 2 H2O + H(+). Its pathway is cofactor biosynthesis; thiamine diphosphate biosynthesis. In terms of biological role, catalyzes the rearrangement of 1-deoxy-D-xylulose 5-phosphate (DXP) to produce the thiazole phosphate moiety of thiamine. Sulfur is provided by the thiocarboxylate moiety of the carrier protein ThiS. In vitro, sulfur can be provided by H(2)S. The polypeptide is Thiazole synthase (Paramagnetospirillum magneticum (strain ATCC 700264 / AMB-1) (Magnetospirillum magneticum)).